The primary structure comprises 1026 residues: MEAAVCSEIEREDGDSSCGDVCFMDKGLHSISELSLDSSIHAINLHCNNISKISSIDHIWNLRHLDLSSNQISQIEGLNTLTKLCTLNLSCNLITRVEGLEALVNLTKLNLSYNHINDLSGLMPLHGLKYKLRYIDLHSNYIDSIHHLLQCTVGLHFLTNLILEKDGEGNPICLIPGYRAIILQTLPQLRILDCKNIFGEPVSLEEINSSHLQCLEGLLDNLVSSDSPLNISEDEVNDDVPAPPMDVLPSLKEFKSTPEDNVLASLLSVCPSSEPEKINQENDFQNEVKLQKLDDQILQLLNETNNSLIDNVPEKDLRPKRDTDITSESDYGNRRECSRKVPRRTKIPYYARTIQTIKHHNKNNGAFVSCNRKMRQPYLRDLYVRSSLVNCNNLRDLDEQKTGVIKVDKNFSDNSTYRSLVEQLDQEREMRWKAEQTEKKLMDYIDELHKQADEKKDVHSQALITTDRLKDAIFKERHCKAQLEIIVHRLQNEVKKLTIELMKARDQQEDHIRHLRTLERALEKMEKQKAQQQAAQIRLIQEVELKASAADREINLLRTSLHQEKQQVQQLHELLALKEQEHRQEIETRQFFTDAEFQDALTKRLCKEERKHEQEVKEYQEKIDILNQQYLDLENEFRIALTVEARRFKDVQDGFEDVATELAKSKHALIWAQRKENESSSLIKDLTCMVKEQKTKLSEVCKLKQEAAANLQNQINTLEILIEDDKQKSIQIELLKHEKTQLISELAAKESLIYGLRTERKVWGQELACQSSTLSQSRGKLEAQIESLCRENESLRKSHESDCDALRIKCKIIEDQNETIRKLKDSLQEKDGQIKLLQEQIALIEKCSQEQLNEKSSQLDSIVEKLERHNERKEKLKQQLKAKELELEEIRKAYSTLNKKWHDKGELLSHLEMQVKEVKEKFEDKERKLKAERDKSLELQKDAMEKLQNMDDAFRRQVDEIVEAHQAEIMQLANEKQKYIDCANLKVQQVEDEMRGLLDETCKNKKMMEEKIKQLACAISEIQKEM.

LRR repeat units follow at residues Ser39 to Trp60, Asn61 to Thr82, Lys83 to Val104, Asn105 to His126, and Lys131 to Thr152. The LRRCT domain maps to Asn170 to Leu212. The interval Asp310–Ser338 is disordered. A compositionally biased stretch (basic and acidic residues) spans Val312–Asp324. Positions Arg428–Leu641 form a coiled coil.

It belongs to the LRRCC1 family.

The protein resides in the cytoplasm. It localises to the cytoskeleton. The protein localises to the microtubule organizing center. It is found in the centrosome. Its subcellular location is the centriole. In terms of biological role, required for the organization of the mitotic spindle. Maintains the structural integrity of centrosomes during mitosis. The sequence is that of Leucine-rich repeat and coiled-coil domain-containing protein 1 (Lrrcc1) from Mus musculus (Mouse).